The primary structure comprises 298 residues: 2-dehydropantoate 2-reductase (298 aa).

NADP(+) contacts are provided by residues 7–12, Asn-98, and Ala-124; that span reads GGGSVG. Asn-98 contacts substrate. The Proton donor role is filled by Lys-179. Substrate is bound by residues Asn-183, Asn-187, Asn-197, and Ser-246. Glu-258 is an NADP(+) binding site.

This sequence belongs to the ketopantoate reductase family.

It localises to the cytoplasm. It carries out the reaction (R)-pantoate + NADP(+) = 2-dehydropantoate + NADPH + H(+). It functions in the pathway cofactor biosynthesis; (R)-pantothenate biosynthesis; (R)-pantoate from 3-methyl-2-oxobutanoate: step 2/2. Its function is as follows. Catalyzes the NADPH-dependent reduction of ketopantoate into pantoic acid. This chain is 2-dehydropantoate 2-reductase (panE), found in Bacillus subtilis (strain 168).